The following is a 717-amino-acid chain: uncharacterized protein (717 aa).

The protein belongs to the asfivirus C717R family.

It localises to the virion. This is an uncharacterized protein from African swine fever virus (strain Badajoz 1971 Vero-adapted) (Ba71V).